Here is a 264-residue protein sequence, read N- to C-terminus: uncharacterized protein (264 aa).

The chain crosses the membrane as a helical span at residues 7–27 (LTLGICLVLLIILIVGYVIMT).

This sequence belongs to the staphylococcal tandem lipoprotein family.

Its subcellular location is the cell membrane. This is an uncharacterized protein from Staphylococcus aureus (strain NCTC 8325 / PS 47).